A 664-amino-acid polypeptide reads, in one-letter code: Cyclic nucleotide-gated channel alpha-2 (664 aa).

Residues 1-10 show a composition bias toward polar residues; the sequence is MMTEKSNGVK. Residues 1–51 are disordered; the sequence is MMTEKSNGVKSSPANNHNHHPPPSIKANGKDDHRAGSRPQSVAADDDTSPE. Topologically, residues 1–146 are cytoplasmic; sequence MMTEKSNGVK…PAGDWYYRWL (146 aa). The helical transmembrane segment at 147 to 168 threads the bilayer; that stretch reads FVIAMPVLYNWCLLVARACFSD. The Extracellular portion of the chain corresponds to 169 to 178; it reads LQRNYFVVWL. A helical membrane pass occupies residues 179–199; sequence VLDYFSDTVYIADLIIRLRTG. The Cytoplasmic portion of the chain corresponds to 200-224; sequence FLEQGLLVKDPKKLRDNYIHTLQFK. A helical transmembrane segment spans residues 225–243; sequence LDVASIIPTDLIYFAVGIH. The Extracellular portion of the chain corresponds to 244–248; it reads SPEVR. A helical membrane pass occupies residues 249–267; sequence FNRLLHFARMFEFFDRTET. The Cytoplasmic portion of the chain corresponds to 268 to 274; sequence RTSYPNI. Residues 272-380 are ion conduction pathway; sequence PNIFRISNLV…GNVGSMISNM (109 aa). A helical transmembrane segment spans residues 275-298; sequence FRISNLVLYILVIIHWNACIYYVI. The Extracellular segment spans residues 299-321; sequence SKSIGFGVDTWVYPNITDPEYGY. The next 2 helical transmembrane spans lie at 322–356 and 357–381; these read LARE…LFVI and FDFL…SNMN. The selectivity filter stretch occupies residues 339 to 342; sequence TIGE. Residues 382-458 are C-linker; sequence ATRAEFQAKI…STLKKVRIFQ (77 aa). At 382–664 the chain is on the cytoplasmic side; sequence ATRAEFQAKI…INTPEPTAAE (283 aa). Positions 462-582 are cyclic nucleotide-binding domain; sequence AGLLVELVLK…EERGREILMK (121 aa). 3',5'-cyclic GMP is bound by residues Gly-522, Ser-525, Arg-538, and Thr-539. 3',5'-cyclic AMP is bound by residues Arg-538 and Thr-539. The stretch at 599-653 forms a coiled coil; sequence VQEKLEQLETNMDTLYTRFARLLAEYTGAQQKLKQRITVLETKMKQNHEDDYLSD.

It belongs to the cyclic nucleotide-gated cation channel (TC 1.A.1.5) family. CNGA2 subfamily. The olfactory cyclic nucleotide-gated channel is an heterotetramer composed of CNGA2, CNGA4 and CNGB1b subunits with 2:1:1 stoichiometry. In terms of tissue distribution, olfactory neurons. Widely expressed in brain, enriched in deep cerebellar nuclei, olfactory bulb mitral cells and cerebellar Purkinje neurons. Expressed in olfactory sensory cilia (at protein level).

Its subcellular location is the cell projection. It localises to the cilium membrane. It catalyses the reaction Ca(2+)(in) = Ca(2+)(out). The enzyme catalyses Na(+)(in) = Na(+)(out). The catalysed reaction is K(+)(in) = K(+)(out). It carries out the reaction NH4(+)(in) = NH4(+)(out). It catalyses the reaction Rb(+)(in) = Rb(+)(out). The enzyme catalyses Li(+)(in) = Li(+)(out). The catalysed reaction is Cs(+)(in) = Cs(+)(out). Its activity is regulated as follows. The channel activity is inhibited by L-cis diltiazem. Functionally, pore-forming subunit of the olfactory cyclic nucleotide-gated channel. Operates in the cilia of olfactory sensory neurons where chemical stimulation of the odorant is converted to an electrical signal. Mediates odorant-induced cAMP-dependent Ca(2+) influx triggering neuron depolarization. The rise of intracellular Ca(2+) levels potentiates the olfactory response by activating Ca(2+)-dependent Cl(-) channels, but it also serves as a negative feedback signal to desensitize the channel for rapid adaptation to odorants. Conducts cAMP- and cGMP-gated ion currents, with permeability for monovalent and divalent cations. This chain is Cyclic nucleotide-gated channel alpha-2, found in Rattus norvegicus (Rat).